The chain runs to 192 residues: Thymidine kinase (192 aa).

ATP-binding positions include 9 to 16 (SAMNAGKS) and 87 to 90 (DECQ). Residue Glu-88 is the Proton acceptor of the active site. Zn(2+)-binding residues include Cys-145, Cys-147, Cys-182, and His-185.

This sequence belongs to the thymidine kinase family. As to quaternary structure, homotetramer.

The protein resides in the cytoplasm. It catalyses the reaction thymidine + ATP = dTMP + ADP + H(+). In Vibrio parahaemolyticus serotype O3:K6 (strain RIMD 2210633), this protein is Thymidine kinase.